The chain runs to 127 residues: Apolipoprotein C-IV (127 aa).

Residues 1 to 27 (MSLLRNRLQALPALCLCVLVLACIGAC) form the signal peptide. Residue asparagine 63 is glycosylated (N-linked (GlcNAc...) asparagine).

Belongs to the apolipoprotein C4 family. Expressed by the liver and secreted in plasma.

It localises to the secreted. Functionally, may participate in lipoprotein metabolism. This is Apolipoprotein C-IV (APOC4) from Homo sapiens (Human).